The following is a 221-amino-acid chain: Chaperone protein TorD (221 aa).

The protein belongs to the TorD/DmsD family. TorD subfamily.

Its subcellular location is the cytoplasm. Involved in the biogenesis of TorA. Acts on TorA before the insertion of the molybdenum cofactor and, as a result, probably favors a conformation of the apoenzyme that is competent for acquiring the cofactor. The polypeptide is Chaperone protein TorD (Psychrobacter sp. (strain PRwf-1)).